A 204-amino-acid polypeptide reads, in one-letter code: HTH-type transcriptional repressor KstR (204 aa).

An HTH tetR-type domain is found at 18 to 78 (RERRKRILDA…SALGREFERI (61 aa)). The H-T-H motif DNA-binding region spans 41 to 60 (QMRAVAERADVAVGTLYRYF).

Homodimer.

Controls the expression of genes used for utilizing diverse lipids as energy sources. This Mycolicibacterium smegmatis (strain ATCC 700084 / mc(2)155) (Mycobacterium smegmatis) protein is HTH-type transcriptional repressor KstR (kstR).